A 448-amino-acid polypeptide reads, in one-letter code: MVASIRSGVLTLLHTACGAGILAMPYAFKPFGLIPGVIMIVLCGACAMQSLFIQARVAKYVPQGRASFSALTRLINPNLGIVFDLAIAIKCFGVGVSYMIVVGDLMPQIMSVWTRNAWLLNRNVQISLIMLFFVAPLSFLKKLNSLRYASMVAISSVAYLCVLVLLHYVAPSDEILRLKGRISYLLPPQSHDLNVLNTLPIFVFAYTCHHNMFSIINEQRSSRFEHVMKIPLIAISLALILYIAIGCAGYLTFGDNIIGNIIMLYPQAVSSTIGRIAIVLLVMLAFPLQCHPARASIHQILQHFAEENVSISATSADEPTVATESSPLIRDSSLDLNEVIEEESIYQPKETPLRGKSFIVITCSILVASYLVAISVSSLARVLAIVGATGSTSISFILPGLFGYKLIGTEHKTAVPLTTKIFKYTGLLLFIWGLIIMITCLTAALKLN.

The Cytoplasmic portion of the chain corresponds to 1 to 7 (MVASIRS). Residues 8-28 (GVLTLLHTACGAGILAMPYAF) form a helical membrane-spanning segment. Residues 29-32 (KPFG) are Vacuolar-facing. Residues 33–53 (LIPGVIMIVLCGACAMQSLFI) form a helical membrane-spanning segment. Residues 54 to 80 (QARVAKYVPQGRASFSALTRLINPNLG) lie on the Cytoplasmic side of the membrane. The chain crosses the membrane as a helical span at residues 81–101 (IVFDLAIAIKCFGVGVSYMIV). At 102-125 (VGDLMPQIMSVWTRNAWLLNRNVQ) the chain is on the vacuolar side. A helical membrane pass occupies residues 126–146 (ISLIMLFFVAPLSFLKKLNSL). Residues 147-150 (RYAS) are Cytoplasmic-facing. The chain crosses the membrane as a helical span at residues 151–171 (MVAISSVAYLCVLVLLHYVAP). Over 172 to 195 (SDEILRLKGRISYLLPPQSHDLNV) the chain is Vacuolar. The chain crosses the membrane as a helical span at residues 196–216 (LNTLPIFVFAYTCHHNMFSII). The Cytoplasmic segment spans residues 217–229 (NEQRSSRFEHVMK). A helical membrane pass occupies residues 230-250 (IPLIAISLALILYIAIGCAGY). At 251 to 267 (LTFGDNIIGNIIMLYPQ) the chain is on the vacuolar side. A helical transmembrane segment spans residues 268 to 288 (AVSSTIGRIAIVLLVMLAFPL). The Cytoplasmic segment spans residues 289–357 (QCHPARASIH…PKETPLRGKS (69 aa)). Ser344 carries the phosphoserine modification. A helical transmembrane segment spans residues 358–378 (FIVITCSILVASYLVAISVSS). At 379 to 381 (LAR) the chain is on the vacuolar side. Residues 382 to 402 (VLAIVGATGSTSISFILPGLF) traverse the membrane as a helical segment. Topologically, residues 403-424 (GYKLIGTEHKTAVPLTTKIFKY) are cytoplasmic. The chain crosses the membrane as a helical span at residues 425–445 (TGLLLFIWGLIIMITCLTAAL). Over 446 to 448 (KLN) the chain is Vacuolar.

It belongs to the amino acid/polyamine transporter 2 family.

The protein resides in the vacuole membrane. In terms of biological role, involved in amino acid efflux from the vacuole to the cytoplasm. Capable of transporting aspartate and glutamate. Requires ATP for function. The protein is Vacuolar amino acid transporter 6 (AVT6) of Saccharomyces cerevisiae (strain ATCC 204508 / S288c) (Baker's yeast).